The primary structure comprises 109 residues: Aquaporin-2 (109 aa).

The Cytoplasmic segment spans residues 1-6 (SVAFSR). Residues 7–27 (AVLAEFLATLIFVFFGLGSAL) form a helical membrane-spanning segment. Over 28-35 (SWPQALPS) the chain is Extracellular. Residues 36-54 (VLQIALAFGLAIGTLVQAL) form a helical membrane-spanning segment. At 55–59 (GHVSG) the chain is on the cytoplasmic side. The segment at residues 60 to 69 (AHINPAVTVA) is an intramembrane region (discontinuously helical). Residues 63–65 (NPA) carry the NPA 1 motif. Residues 70–80 (CLVGCHVSFLR) are Cytoplasmic-facing. Residues 81–102 (AAFYVAAQLLGAVAGAAILHEI) traverse the membrane as a helical segment. At 103–109 (TPPDVRG) the chain is on the extracellular side.

Belongs to the MIP/aquaporin (TC 1.A.8) family. Homotetramer. In terms of processing, serine phosphorylation is necessary and sufficient for expression at the apical membrane. Endocytosis is not phosphorylation-dependent. N-glycosylated.

It localises to the apical cell membrane. It is found in the basolateral cell membrane. The protein resides in the cell membrane. The protein localises to the cytoplasmic vesicle membrane. Its subcellular location is the golgi apparatus. It localises to the trans-Golgi network membrane. The catalysed reaction is H2O(in) = H2O(out). It carries out the reaction glycerol(in) = glycerol(out). Forms a water-specific channel that provides the plasma membranes of renal collecting duct with high permeability to water, thereby permitting water to move in the direction of an osmotic gradient. Plays an essential role in renal water homeostasis. Could also be permeable to glycerol. This Dasypus novemcinctus (Nine-banded armadillo) protein is Aquaporin-2.